The primary structure comprises 460 residues: UDP-N-acetylmuramate--L-alanine ligase (460 aa).

ATP is bound at residue 118-124 (GAHGKTT).

The protein belongs to the MurCDEF family.

Its subcellular location is the cytoplasm. The enzyme catalyses UDP-N-acetyl-alpha-D-muramate + L-alanine + ATP = UDP-N-acetyl-alpha-D-muramoyl-L-alanine + ADP + phosphate + H(+). The protein operates within cell wall biogenesis; peptidoglycan biosynthesis. Cell wall formation. The sequence is that of UDP-N-acetylmuramate--L-alanine ligase from Clostridium botulinum (strain Eklund 17B / Type B).